The sequence spans 251 residues: Triosephosphate isomerase (251 aa).

Residue 9–11 (NWK) coordinates substrate. The active-site Electrophile is the His95. The active-site Proton acceptor is Glu167. Substrate-binding positions include Gly173, Ser213, and 234–235 (GG).

The protein belongs to the triosephosphate isomerase family. As to quaternary structure, homodimer.

The protein resides in the cytoplasm. It carries out the reaction D-glyceraldehyde 3-phosphate = dihydroxyacetone phosphate. Its pathway is carbohydrate biosynthesis; gluconeogenesis. It functions in the pathway carbohydrate degradation; glycolysis; D-glyceraldehyde 3-phosphate from glycerone phosphate: step 1/1. In terms of biological role, involved in the gluconeogenesis. Catalyzes stereospecifically the conversion of dihydroxyacetone phosphate (DHAP) to D-glyceraldehyde-3-phosphate (G3P). In Enterococcus faecalis (strain ATCC 700802 / V583), this protein is Triosephosphate isomerase.